We begin with the raw amino-acid sequence, 259 residues long: MILVIDVGNTNCTVGVYEKQKLLKHWRMTTDRHRTSDELGMTVLNFFSYANLTPSDIQGIIISSVVPPIMHAMETMCVRYFNIRPLIVGPGIKTGLNLKVDNPREIGSDRIVNAVAASEEYGTPVIVVDFGTATTFCYIDESGVYQGGAIAPGIMISTEALYNRAAKLPRVDIAESSQIIGKSTVSSMQAGIFYGFVGQCEGIIAEMKKQSNASPVVVATGGLARMITEKSSAVDILDPFLTLKGLELLYRRNKPTTEK.

6–13 (DVGNTNCT) provides a ligand contact to ATP. Position 107-110 (107-110 (GSDR)) interacts with substrate. The active-site Proton acceptor is aspartate 109. Aspartate 129 contributes to the K(+) binding site. Threonine 132 is an ATP binding site. Threonine 184 is a substrate binding site.

This sequence belongs to the type III pantothenate kinase family. In terms of assembly, homodimer. Requires NH4(+) as cofactor. K(+) serves as cofactor.

It localises to the cytoplasm. The enzyme catalyses (R)-pantothenate + ATP = (R)-4'-phosphopantothenate + ADP + H(+). It participates in cofactor biosynthesis; coenzyme A biosynthesis; CoA from (R)-pantothenate: step 1/5. Catalyzes the phosphorylation of pantothenate (Pan), the first step in CoA biosynthesis. The sequence is that of Type III pantothenate kinase from Listeria monocytogenes serovar 1/2a (strain ATCC BAA-679 / EGD-e).